We begin with the raw amino-acid sequence, 1225 residues long: NHS-like protein 2 (1225 aa).

9 disordered regions span residues 161-180 (TFRSSDEATKPTPNPRPQSA), 193-213 (QLSEDETTTQGVRAPEASLSL), 291-371 (NFSQ…ESMG), 466-510 (HMPE…TTDV), 543-632 (LSAQ…PEST), 670-766 (QGSS…KFPK), 812-1009 (KTNP…KKPS), 1042-1093 (DTKC…DKTA), and 1128-1203 (KEPG…KTTN). Polar residues-rich tracts occupy residues 291-315 (NFSQRDQGHSNSPAGSVAHSTTSDI) and 339-350 (SLTSPVLRTPSS). Ser500 is modified (phosphoserine). Residues 552 to 568 (RRQRSKSISLRKAKKKP) show a composition bias toward basic residues. A Phosphoserine modification is found at Ser576. The segment covering 675–688 (SLASPSTSRATTPS) has biased composition (low complexity). Ser691 bears the Phosphoserine mark. 2 stretches are compositionally biased toward polar residues: residues 710–730 (SPSSGYSSQSETPTPTVSMSL) and 812–827 (KTNPNQPIMPMVTQSD). Residues 841-851 (PEDDIESPEYA) are compositionally biased toward acidic residues. Residues 852 to 867 (EEPRAEEVFTLPERKT) show a composition bias toward basic and acidic residues. 2 stretches are compositionally biased toward polar residues: residues 939-968 (GESTAPSSLVFTPFASSSDAFFSGTQQPPQ) and 1054-1065 (SLGQRVTSTPQA). Ser1054 bears the Phosphoserine mark. Residues 1082–1093 (TEEKSLISDKTA) show a composition bias toward basic and acidic residues. Residues 1138–1155 (RTSSHSPIKNTAESPISE) are compositionally biased toward polar residues. The segment covering 1156–1166 (STATAGSGSSA) has biased composition (low complexity).

Belongs to the NHS family.

The polypeptide is NHS-like protein 2 (Homo sapiens (Human)).